A 468-amino-acid chain; its full sequence is POC1 centriolar protein homolog B (468 aa).

7 WD repeats span residues G16 to K55, G58 to V97, A100 to S139, Q142 to T181, D184 to H223, V226 to T265, and G268 to K307. A coiled-coil region spans residues N420–K459.

The protein belongs to the WD repeat POC1 family. In terms of assembly, interacts with pat. As to expression, highly expressed in ovary and, at low levels, in testis.

The protein resides in the cytoplasm. The protein localises to the cytoskeleton. Its subcellular location is the microtubule organizing center. It localises to the centrosome. It is found in the centriole. Functionally, plays an important role in centriole assembly and/or stability and ciliogenesis. Involved in early steps of centriole duplication, as well as in the later steps of centriole length control. This chain is POC1 centriolar protein homolog B (poc1b), found in Xenopus laevis (African clawed frog).